A 274-amino-acid chain; its full sequence is UPF0173 metal-dependent hydrolase Adeh_1068 (274 aa).

This sequence belongs to the UPF0173 family.

In Anaeromyxobacter dehalogenans (strain 2CP-C), this protein is UPF0173 metal-dependent hydrolase Adeh_1068.